A 197-amino-acid chain; its full sequence is Small ribosomal subunit protein uS4 (197 aa).

An S4 RNA-binding domain is found at 94–158 (RRLDNVIYRF…LKKYLYDYKN (65 aa)).

It belongs to the universal ribosomal protein uS4 family. Part of the 30S ribosomal subunit. Contacts protein S5. The interaction surface between S4 and S5 is involved in control of translational fidelity.

One of the primary rRNA binding proteins, it binds directly to 16S rRNA where it nucleates assembly of the body of the 30S subunit. Functionally, with S5 and S12 plays an important role in translational accuracy. This Carsonella ruddii (strain PV) protein is Small ribosomal subunit protein uS4 (rpsD).